Reading from the N-terminus, the 90-residue chain is Probable Fe(2+)-trafficking protein (90 aa).

Belongs to the Fe(2+)-trafficking protein family.

Functionally, could be a mediator in iron transactions between iron acquisition and iron-requiring processes, such as synthesis and/or repair of Fe-S clusters in biosynthetic enzymes. The polypeptide is Probable Fe(2+)-trafficking protein (Paracidovorax citrulli (strain AAC00-1) (Acidovorax citrulli)).